The following is a 396-amino-acid chain: Tyrosine--tRNA ligase (396 aa).

The 'HIGH' region signature appears at 42–51 (PTAPDIHLGH). The 'KMSKS' region signature appears at 226–230 (KMSKS). Residue K229 participates in ATP binding. In terms of domain architecture, S4 RNA-binding spans 334-395 (LPIANLLKEA…GKRKFAKIII (62 aa)).

Belongs to the class-I aminoacyl-tRNA synthetase family. TyrS type 2 subfamily. As to quaternary structure, homodimer.

Its subcellular location is the cytoplasm. The catalysed reaction is tRNA(Tyr) + L-tyrosine + ATP = L-tyrosyl-tRNA(Tyr) + AMP + diphosphate + H(+). Its function is as follows. Catalyzes the attachment of tyrosine to tRNA(Tyr) in a two-step reaction: tyrosine is first activated by ATP to form Tyr-AMP and then transferred to the acceptor end of tRNA(Tyr). This Francisella tularensis subsp. tularensis (strain SCHU S4 / Schu 4) protein is Tyrosine--tRNA ligase.